Reading from the N-terminus, the 85-residue chain is Cell division topological specificity factor (85 aa).

It belongs to the MinE family.

Prevents the cell division inhibition by proteins MinC and MinD at internal division sites while permitting inhibition at polar sites. This ensures cell division at the proper site by restricting the formation of a division septum at the midpoint of the long axis of the cell. This chain is Cell division topological specificity factor, found in Shewanella sp. (strain ANA-3).